The sequence spans 488 residues: Cobyric acid synthase (488 aa).

Positions 248–441 constitute a GATase cobBQ-type domain; sequence VLRVVVPALP…VHGLFDAPDA (194 aa). Cys328 serves as the catalytic Nucleophile. His433 is an active-site residue.

It belongs to the CobB/CobQ family. CobQ subfamily.

It functions in the pathway cofactor biosynthesis; adenosylcobalamin biosynthesis. Catalyzes amidations at positions B, D, E, and G on adenosylcobyrinic A,C-diamide. NH(2) groups are provided by glutamine, and one molecule of ATP is hydrogenolyzed for each amidation. The sequence is that of Cobyric acid synthase from Burkholderia ambifaria (strain ATCC BAA-244 / DSM 16087 / CCUG 44356 / LMG 19182 / AMMD) (Burkholderia cepacia (strain AMMD)).